Here is a 131-residue protein sequence, read N- to C-terminus: Insulin-like 3 (131 aa).

An N-terminal signal peptide occupies residues methionine 1–alanine 24. Disulfide bonds link cysteine 34–cysteine 117, cysteine 46–cysteine 130, and cysteine 116–cysteine 121. Residues proline 58–histidine 104 constitute a propeptide, c peptide like. Positions alanine 86–arginine 105 are disordered.

This sequence belongs to the insulin family. As to quaternary structure, heterodimer of a B chain and an A chain linked by two disulfide bonds. As to expression, highest expression in the Leydig cells of the testis.

It is found in the secreted. Functionally, seems to play a role in testicular function. May be a trophic hormone with a role in testicular descent in fetal life. Is a ligand for LGR8 receptor. This Callithrix jacchus (White-tufted-ear marmoset) protein is Insulin-like 3 (INSL3).